The following is a 328-amino-acid chain: Tetraacyldisaccharide 4'-kinase (328 aa).

Position 55 to 62 (55 to 62 (TAGGNGKT)) interacts with ATP.

This sequence belongs to the LpxK family.

It catalyses the reaction a lipid A disaccharide + ATP = a lipid IVA + ADP + H(+). Its pathway is glycolipid biosynthesis; lipid IV(A) biosynthesis; lipid IV(A) from (3R)-3-hydroxytetradecanoyl-[acyl-carrier-protein] and UDP-N-acetyl-alpha-D-glucosamine: step 6/6. Transfers the gamma-phosphate of ATP to the 4'-position of a tetraacyldisaccharide 1-phosphate intermediate (termed DS-1-P) to form tetraacyldisaccharide 1,4'-bis-phosphate (lipid IVA). The protein is Tetraacyldisaccharide 4'-kinase of Yersinia enterocolitica serotype O:8 / biotype 1B (strain NCTC 13174 / 8081).